Consider the following 150-residue polypeptide: Thyroid hormone-inducible hepatic protein (150 aa).

A disordered region spans residues 83-105 (KVAGNEGSEAENEAAETEEAEED). Phosphoserine is present on serine 90. Over residues 90–105 (SEAENEAAETEEAEED) the composition is skewed to acidic residues.

This sequence belongs to the SPOT14 family. As to quaternary structure, homodimer. Heterodimer with MID1IP1. Interacts with THRB and PLAGL1. Highly expressed in liver, lactating mammary gland, epididymal, retroperitoneal and brown fat. Mainly expressed in tissues that synthesize triglycerides.

It is found in the nucleus. The protein localises to the cytoplasm. Its function is as follows. Plays a role in the regulation of lipogenesis, especially in lactating mammary gland. Important for the biosynthesis of triglycerides with medium-length fatty acid chains. May modulate lipogenesis by interacting with MID1IP1 and preventing its interaction with ACACA. May function as transcriptional coactivator. May modulate the transcription factor activity of THRB. The sequence is that of Thyroid hormone-inducible hepatic protein (Thrsp) from Rattus norvegicus (Rat).